We begin with the raw amino-acid sequence, 345 residues long: MDTMRWQDDHLLLLDQTKLPLTEEYIECWDHVILCDAIKKLKVRGAPAIGAAAAFGVALAALNYTGEDRAEFEADVKKAIADLGKTRPTAVNLFWALRRMEAVLEDIRTYSVKEQQERLIAEAKAVFDEDRAMNEQMGQYGLELIPESAGILTHCNAGALATAGFGTALGVIRAAHRAGKEISVFADETRPLLQGARLTAWELMQDGIPVTLITDSMAAYVMKQKLVDLVIVGADRITANGDVANKIGTYGVALAAKAHGIPFYVAAPVSTFDLSLESGLQIPIEERDTEEVRRVGDSITAPPGVPVYNPAFDVTPAELVTAFITDRGVFRPPYLETLRAMAETK.

Residues 44 to 46, Arg-87, and Gln-194 each bind substrate; that span reads RGA. The active-site Proton donor is Asp-235. 245 to 246 is a substrate binding site; sequence NK.

Belongs to the eIF-2B alpha/beta/delta subunits family. MtnA subfamily.

It catalyses the reaction 5-(methylsulfanyl)-alpha-D-ribose 1-phosphate = 5-(methylsulfanyl)-D-ribulose 1-phosphate. It functions in the pathway amino-acid biosynthesis; L-methionine biosynthesis via salvage pathway; L-methionine from S-methyl-5-thio-alpha-D-ribose 1-phosphate: step 1/6. Its function is as follows. Catalyzes the interconversion of methylthioribose-1-phosphate (MTR-1-P) into methylthioribulose-1-phosphate (MTRu-1-P). This chain is Methylthioribose-1-phosphate isomerase, found in Heliobacterium modesticaldum (strain ATCC 51547 / Ice1).